Here is a 104-residue protein sequence, read N- to C-terminus: Naphthalene 1,2-dioxygenase system, ferredoxin component (104 aa).

In terms of domain architecture, Rieske spans 6–101; it reads IEAVALSDIL…VKIENLRVMI (96 aa). C45, H47, C64, and H67 together coordinate [2Fe-2S] cluster.

This sequence belongs to the bacterial ring-hydroxylating dioxygenase ferredoxin component family. In terms of assembly, the naphthalene dioxygenase (NDO) multicomponent enzyme system is composed of an electron transfer component and a dioxygenase component (iron sulfur protein (ISP)). The electron transfer component is composed of a ferredoxin reductase (NdoR) and a ferredoxin (NdoA), and the dioxygenase component is formed of a heterohexamer (trimer of heterodimers) of three large alpha subunits (NdoB) and three small beta subunits (NdoC). [2Fe-2S] cluster is required as a cofactor.

The protein operates within aromatic compound metabolism; naphthalene degradation. Component of the naphthalene dioxygenase (NDO) multicomponent enzyme system which catalyzes the incorporation of both atoms of molecular oxygen into naphthalene to form cis-(1R,2S)-dihydroxy-1,2-dihydronaphthalene. Functions as an intermediate electron transfer protein via a specific interaction with iron sulfur protein components (ISP) (NdoB and NdoC). Also able to catalyze the cis-dihydroxylation of biphenyl and phenanthrene. The protein is Naphthalene 1,2-dioxygenase system, ferredoxin component of Pseudomonas putida (Arthrobacter siderocapsulatus).